A 372-amino-acid chain; its full sequence is MSLEPFKHSEALTFGVELELQLVNRHDYDLAPFAPDLLRALRGTQHAGDIKPEISPSMIEISTGICHDYAQALEELSVMRDLMVNASRGLNLGICGGGTHPFQVWSDRTISDSPRYQYISELYGYLAKQFTVFGQHVHIGCPSPDESLFLLHAIGRYVPHFIALAASSPYVQGVDTGFASARLNSVAAFPMSGRAPFVLTWDAFKAYFDKMRATGVIESMKDFYWDIRPKPEFGTIEVRVMDTPLTVQRACDIAAYIQALARYLLLSRPFMPQEDDYLVYTFNRFQACRFGLEGEYVHPNELTRMPIADHILSICDALEPHAEALGSLEALSNIRALAASRSNDAHWVRAANRDAHSLRDMVRQTCEQWGGG.

It belongs to the glutamate--cysteine ligase type 2 family. YbdK subfamily.

It carries out the reaction L-cysteine + L-glutamate + ATP = gamma-L-glutamyl-L-cysteine + ADP + phosphate + H(+). Its function is as follows. ATP-dependent carboxylate-amine ligase which exhibits weak glutamate--cysteine ligase activity. The chain is Putative glutamate--cysteine ligase 2 from Cupriavidus metallidurans (strain ATCC 43123 / DSM 2839 / NBRC 102507 / CH34) (Ralstonia metallidurans).